A 180-amino-acid chain; its full sequence is CDP-archaeol synthase (180 aa).

The next 5 membrane-spanning stretches (helical) occupy residues 5-25 (LVATAFWAMLPAYVPNNAAVL), 54-74 (AVGTLTGVVLALALNRIAEPA), 78-98 (LGVDLPTFALPAAFALAFGAM), 118-138 (AFPGLDQLDFVVVALAAVFVV), and 142-162 (WALAVFTPSVLVVVLVMTPIL).

It belongs to the CDP-archaeol synthase family. The cofactor is Mg(2+).

It localises to the cell membrane. It carries out the reaction 2,3-bis-O-(geranylgeranyl)-sn-glycerol 1-phosphate + CTP + H(+) = CDP-2,3-bis-O-(geranylgeranyl)-sn-glycerol + diphosphate. It functions in the pathway membrane lipid metabolism; glycerophospholipid metabolism. In terms of biological role, catalyzes the formation of CDP-2,3-bis-(O-geranylgeranyl)-sn-glycerol (CDP-archaeol) from 2,3-bis-(O-geranylgeranyl)-sn-glycerol 1-phosphate (DGGGP) and CTP. This reaction is the third ether-bond-formation step in the biosynthesis of archaeal membrane lipids. The chain is CDP-archaeol synthase from Halorubrum lacusprofundi (strain ATCC 49239 / DSM 5036 / JCM 8891 / ACAM 34).